The chain runs to 528 residues: Beta-hexosaminidase subunit alpha (528 aa).

Residues M1–A22 form the signal peptide. Positions L23–Q88 are excised as a propeptide. A disulfide bond links C58 and C104. Residues N115, N157, and N295 are each glycosylated (N-linked (GlcNAc...) asparagine). C277 and C328 are disulfide-bonded. E323 serves as the catalytic Proton donor. A critical for hydrolysis GM2 gangliosides region spans residues N422–R423. An N-linked (GlcNAc...) asparagine glycan is attached at N487. C504 and C521 are joined by a disulfide.

This sequence belongs to the glycosyl hydrolase 20 family. In terms of assembly, there are 3 beta-hexosaminidase isozymes: isozyme A (hexosaminidase A) is a heterodimer composed of one subunit alpha and one subunit beta (chain A and B); isozyme B (hexosaminidase B) is a homodimer of two beta subunits (two chains A and B); isozyme S (hexosaminidase S) is a homodimer of two alpha subunits. The composition of the dimer (isozyme A versus isozyme S) has a significant effect on the substrate specificity of the alpha subunit active site.

It is found in the lysosome. It carries out the reaction Hydrolysis of terminal non-reducing N-acetyl-D-hexosamine residues in N-acetyl-beta-D-hexosaminides.. The catalysed reaction is N-acetyl-beta-D-galactosaminyl-(1-&gt;4)-beta-D-3-sulfogalactosyl-(1-&gt;4)-beta-D-glucosyl-(1&lt;-&gt;1')-ceramide + H2O = a beta-D-3-sulfogalactosyl-(1-&gt;4)-beta-D-glucosyl-(1&lt;-&gt;1')-ceramide + N-acetyl-beta-D-galactosamine. The enzyme catalyses a ganglioside GM2 (d18:1(4E)) + H2O = a ganglioside GM3 (d18:1(4E)) + N-acetyl-beta-D-galactosamine. It catalyses the reaction a ganglioside GM2 + H2O = a ganglioside GM3 + N-acetyl-beta-D-galactosamine. It carries out the reaction beta-D-GalNAc-(1-&gt;4)-alpha-L-IdoA-(1-&gt;3)-beta-D-GalNAc-4-sulfate-(1-&gt;4)-alpha-L-IdoA-(1-&gt;3)-D-GalNAc-4-sulfate + H2O = alpha-L-IdoA-(1-&gt;3)-beta-D-GalNAc-4-sulfate-(1-&gt;4)-alpha-L-IdoA-(1-&gt;3)-D-GalNAc-4-sulfate + N-acetyl-D-galactosamine. The catalysed reaction is N-acetyl-beta-D-6-sulfogalactosaminyl-(1-&gt;4)-alpha-L-iduronyl-(1-&gt;3)-N-acetyl-D-6-sulfogalactosamine + H2O = alpha-L-iduronyl-(1-&gt;3)-N-acetyl-D-6-sulfogalactosamine + N-acetyl-D-6-sulfogalactosamine. With respect to regulation, addition of GM2A stimulates the hydrolysis of sulfated glycosphingolipid SM2 and the ganglioside GM2. In terms of biological role, hydrolyzes the non-reducing end N-acetyl-D-hexosamine and/or sulfated N-acetyl-D-hexosamine of glycoconjugates, such as the oligosaccharide moieties from proteins and neutral glycolipids, or from certain mucopolysaccharides. The isozyme S is as active as the isozyme A on the anionic bis-sulfated glycans, the chondroitin-6-sulfate trisaccharide (C6S-3), and the dermatan sulfate pentasaccharide, and the sulfated glycosphingolipid SM2. The isozyme B does not hydrolyze each of these substrates, however hydrolyzes efficiently neutral oligosaccharide. Only the isozyme A is responsible for the degradation of GM2 gangliosides in the presence of GM2A. This is Beta-hexosaminidase subunit alpha from Rattus norvegicus (Rat).